The following is a 230-amino-acid chain: V-type proton ATPase subunit E (230 aa).

It belongs to the V-ATPase E subunit family. V-ATPase is a heteromultimeric enzyme composed of a peripheral catalytic V1 complex (components A to H) attached to an integral membrane V0 proton pore complex (components: a, c, c', c'', d, e, f and VOA1).

The protein resides in the vacuole membrane. Subunit of the V1 complex of vacuolar(H+)-ATPase (V-ATPase), a multisubunit enzyme composed of a peripheral complex (V1) that hydrolyzes ATP and a membrane integral complex (V0) that translocates protons. V-ATPase is responsible for acidifying and maintaining the pH of intracellular compartments. The polypeptide is V-type proton ATPase subunit E (Neurospora crassa (strain ATCC 24698 / 74-OR23-1A / CBS 708.71 / DSM 1257 / FGSC 987)).